A 380-amino-acid chain; its full sequence is N-acetylneuraminate epimerase (380 aa).

The first 21 residues, Met1–Ala21, serve as a signal peptide directing secretion. 7 Kelch repeats span residues Thr42 to Asn86, Lys88 to Gly140, Lys142 to Asp176, Pro177 to Asp222, Leu225 to Gly274, Ala296 to Asn349, and Val351 to Glu380. Catalysis depends on Glu231, which acts as the Proton acceptor.

This sequence belongs to the NanM family. In terms of assembly, homodimer.

The protein localises to the periplasm. It carries out the reaction N-acetyl-alpha-neuraminate = N-acetyl-beta-neuraminate. Its function is as follows. Converts alpha-N-acetylneuranimic acid (Neu5Ac) to the beta-anomer, accelerating the equilibrium between the alpha- and beta-anomers. Probably facilitates sialidase-negative bacteria to compete successfully for limited amounts of extracellular Neu5Ac, which is likely taken up in the beta-anomer. In addition, the rapid removal of sialic acid from solution might be advantageous to the bacterium to damp down host responses. The polypeptide is N-acetylneuraminate epimerase (Pasteurella multocida (strain Pm70)).